We begin with the raw amino-acid sequence, 189 residues long: UPF0398 protein lhv_1265 (189 aa).

Belongs to the UPF0398 family.

In Lactobacillus helveticus (strain DPC 4571), this protein is UPF0398 protein lhv_1265.